The following is a 378-amino-acid chain: Putative glutamate--cysteine ligase 2 (378 aa).

The protein belongs to the glutamate--cysteine ligase type 2 family. YbdK subfamily.

It catalyses the reaction L-cysteine + L-glutamate + ATP = gamma-L-glutamyl-L-cysteine + ADP + phosphate + H(+). Its function is as follows. ATP-dependent carboxylate-amine ligase which exhibits weak glutamate--cysteine ligase activity. This is Putative glutamate--cysteine ligase 2 from Leifsonia xyli subsp. xyli (strain CTCB07).